A 334-amino-acid chain; its full sequence is L-lactate dehydrogenase B chain (334 aa).

Residue Ala2 is modified to N-acetylalanine. Lys7 carries the post-translational modification N6-acetyllysine. Phosphoserine is present on residues Ser11 and Ser44. NAD(+)-binding positions include 30–58 and Arg100; that span reads GQVG…LEDK. Residue Lys58 is modified to N6-acetyllysine. Arg107 serves as a coordination point for substrate. Lys119 bears the N6-acetyllysine mark. Position 139 (Asn139) interacts with NAD(+). Positions 139 and 170 each coordinate substrate. Residue His194 is the Proton acceptor of the active site. The residue at position 240 (Tyr240) is a Phosphotyrosine. Thr249 provides a ligand contact to substrate. At Lys329 the chain carries N6-acetyllysine.

The protein belongs to the LDH/MDH superfamily. LDH family. As to quaternary structure, homotetramer. Interacts with PTEN upstream reading frame protein MP31; the interaction leads to inhibition of mitochondrial lactate dehydrogenase activity, preventing conversion of lactate to pyruvate in mitochondria.

The protein resides in the cytoplasm. Its subcellular location is the mitochondrion inner membrane. It carries out the reaction (S)-lactate + NAD(+) = pyruvate + NADH + H(+). Its pathway is fermentation; pyruvate fermentation to lactate; (S)-lactate from pyruvate: step 1/1. In terms of biological role, interconverts simultaneously and stereospecifically pyruvate and lactate with concomitant interconversion of NADH and NAD(+). The chain is L-lactate dehydrogenase B chain (Ldhb) from Mus musculus (Mouse).